An 884-amino-acid chain; its full sequence is Kinesin-like protein KIN-7C (884 aa).

The Kinesin motor domain occupies 33-355 (RIQVLVRLRP…LLFGSCAKEV (323 aa)). 119 to 126 (GQTSSGKT) provides a ligand contact to ATP. Residues 364-435 (VMSDKALVKH…LQDLLQSVGD (72 aa)) are a coiled coil. A disordered region spans residues 434 to 530 (GDHDLNRQVQ…VNSRHSRPSG (97 aa)). The segment covering 449–460 (RSPPSVGMPPSV) has biased composition (low complexity). Basic and acidic residues predominate over residues 461–483 (SRDDSSQVSHDDSDLYKEVRCIE). Residues 498–523 (GESSSPQDSNMNSGLHGNDSNASVNS) are compositionally biased toward polar residues.

This sequence belongs to the TRAFAC class myosin-kinesin ATPase superfamily. Kinesin family. KIN-7 subfamily.

This chain is Kinesin-like protein KIN-7C, found in Oryza sativa subsp. japonica (Rice).